Reading from the N-terminus, the 136-residue chain is ATP synthase F(0) complex subunit C1, mitochondrial (136 aa).

Residues Met-1–Arg-61 constitute a mitochondrion transit peptide. The chain crosses the membrane as a helical span at residues Val-77–Tyr-97. Position 104 is an N6,N6,N6-trimethyllysine (Lys-104). Residues Ile-112–Ile-132 form a helical membrane-spanning segment.

This sequence belongs to the ATPase C chain family. Homooctamer; the c-ring consists of eight c subunits forming a circle, and each subunit adopts a hairpin shape. Component of the ATP synthase complex composed at least of ATP5F1A/subunit alpha, ATP5F1B/subunit beta, ATP5MC1/subunit c (homooctomer), MT-ATP6/subunit a, MT-ATP8/subunit 8, ATP5ME/subunit e, ATP5MF/subunit f, ATP5MG/subunit g, ATP5MK/subunit k, ATP5MJ/subunit j, ATP5F1C/subunit gamma, ATP5F1D/subunit delta, ATP5F1E/subunit epsilon, ATP5PF/subunit F6, ATP5PB/subunit b, ATP5PD/subunit d, ATP5PO/subunit OSCP. ATP synthase complex consists of a soluble F(1) head domain (subunits alpha(3) and beta(3)) - the catalytic core - and a membrane F(0) domain - the membrane proton channel (subunits c, a, 8, e, f, g, k and j). These two domains are linked by a central stalk (subunits gamma, delta, and epsilon) rotating inside the F1 region and a stationary peripheral stalk (subunits F6, b, d, and OSCP). Interacts with TMEM70 (homooligomer form); this interaction facilitates the oligomer formation of subunit c/ATP5MC1 (c-ring) and the c-ring membrane insertion and also protects ATP5MC1 against intramitochondrial proteolysis. In terms of processing, trimethylated by ATPSCKMT at Lys-104. Methylation is required for proper incorporation of the C subunit into the ATP synthase complex and mitochondrial respiration.

It localises to the mitochondrion membrane. It catalyses the reaction H(+)(in) = H(+)(out). Subunit c, of the mitochondrial membrane ATP synthase complex (F(1)F(0) ATP synthase or Complex V) that produces ATP from ADP in the presence of a proton gradient across the membrane which is generated by electron transport complexes of the respiratory chain. ATP synthase complex consist of a soluble F(1) head domain - the catalytic core - and a membrane F(1) domain - the membrane proton channel. These two domains are linked by a central stalk rotating inside the F(1) region and a stationary peripheral stalk. During catalysis, ATP synthesis in the catalytic domain of F(1) is coupled via a rotary mechanism of the central stalk subunits to proton translocation. With the subunit a (MT-ATP6), forms the proton-conducting channel in the F(0) domain, that contains two crucial half-channels (inlet and outlet) that facilitate proton movement from the mitochondrial intermembrane space (IMS) into the matrix. Protons are taken up via the inlet half-channel and released through the outlet half-channel, following a Grotthuss mechanism. The protein is ATP synthase F(0) complex subunit C1, mitochondrial of Sus scrofa (Pig).